Consider the following 123-residue polypeptide: Large ribosomal subunit protein bL19 (123 aa).

This sequence belongs to the bacterial ribosomal protein bL19 family.

This protein is located at the 30S-50S ribosomal subunit interface and may play a role in the structure and function of the aminoacyl-tRNA binding site. The polypeptide is Large ribosomal subunit protein bL19 (Thermomicrobium roseum (strain ATCC 27502 / DSM 5159 / P-2)).